Consider the following 468-residue polypeptide: 3-isopropylmalate dehydratase large subunit (468 aa).

[4Fe-4S] cluster contacts are provided by cysteine 347, cysteine 407, and cysteine 410.

This sequence belongs to the aconitase/IPM isomerase family. LeuC type 1 subfamily. Heterodimer of LeuC and LeuD. It depends on [4Fe-4S] cluster as a cofactor.

The catalysed reaction is (2R,3S)-3-isopropylmalate = (2S)-2-isopropylmalate. It functions in the pathway amino-acid biosynthesis; L-leucine biosynthesis; L-leucine from 3-methyl-2-oxobutanoate: step 2/4. Functionally, catalyzes the isomerization between 2-isopropylmalate and 3-isopropylmalate, via the formation of 2-isopropylmaleate. The polypeptide is 3-isopropylmalate dehydratase large subunit (Synechococcus elongatus (strain ATCC 33912 / PCC 7942 / FACHB-805) (Anacystis nidulans R2)).